The chain runs to 185 residues: Ribosome-recycling factor (185 aa).

The protein belongs to the RRF family.

The protein resides in the cytoplasm. Functionally, responsible for the release of ribosomes from messenger RNA at the termination of protein biosynthesis. May increase the efficiency of translation by recycling ribosomes from one round of translation to another. The chain is Ribosome-recycling factor from Thermotoga sp. (strain RQ2).